The primary structure comprises 651 residues: Probable potassium transport system protein Kup (651 aa).

A compositionally biased stretch (basic and acidic residues) spans 1–16 (MRDSPGSKSSSERWHD). Residues 1-31 (MRDSPGSKSSSERWHDTMAVSDPTAEGKDES) are disordered. The next 12 helical transmembrane spans lie at 38-58 (FWALTLGSVGVVFGDIGTSPL), 74-94 (VTPAIVLGVLSLILWSLFIVV), 129-149 (LLLLALGVVGASMFIGDSMIT), 168-188 (LQDYVVPLTLVILVMLFAVQS), 197-217 (AFAPVMALWFLTIAVLGVLHI), 232-252 (AIHFLLNHGLLGLVIMGLVFL), 276-296 (WFCLVLPSLLLNYFGQGALIL), 309-329 (LAPAPLILPLVILATAATVIA), 366-386 (IYLPRVNLLLLIGVLLLVLLF), 396-416 (YGIAVSTTMVADGIMGFVVVW), 423-443 (PAAAAALVVPLVVVDMMFFSA), and 448-468 (LFDGAWVPLLFGIAMVVLIWT).

This sequence belongs to the HAK/KUP transporter (TC 2.A.72) family.

It is found in the cell inner membrane. The enzyme catalyses K(+)(in) + H(+)(in) = K(+)(out) + H(+)(out). In terms of biological role, transport of potassium into the cell. Likely operates as a K(+):H(+) symporter. This is Probable potassium transport system protein Kup from Nitrobacter winogradskyi (strain ATCC 25391 / DSM 10237 / CIP 104748 / NCIMB 11846 / Nb-255).